A 410-amino-acid polypeptide reads, in one-letter code: Regulator of microtubule dynamics protein 2 (410 aa).

The helical transmembrane segment at 10 to 27 (ILGIVVGTAGISLLLLWY) threads the bilayer. Positions 71-109 (RQLQILEKLNELLTHMEELKEEIRVLKEAIPKLEEYIQG) form a coiled coil. A Phosphoserine modification is found at S121. Over residues 122–131 (PQHRARKRRL) the composition is skewed to basic residues. The tract at residues 122 to 153 (PQHRARKRRLATVQSSATSNSSEEAESEGGYV) is disordered. T139 carries the phosphothreonine modification. Y152 bears the Phosphotyrosine mark. 2 positions are modified to phosphothreonine: T154 and T157.

This sequence belongs to the RMDN family. As to quaternary structure, interacts with microtubules.

The protein resides in the membrane. It localises to the cytoplasm. Its subcellular location is the cytoskeleton. The protein localises to the spindle. It is found in the spindle pole. This is Regulator of microtubule dynamics protein 2 (RMDN2) from Bos taurus (Bovine).